The following is a 257-amino-acid chain: DNA repair protein RecO (257 aa).

This sequence belongs to the RecO family.

Functionally, involved in DNA repair and RecF pathway recombination. This chain is DNA repair protein RecO, found in Synechococcus sp. (strain CC9605).